We begin with the raw amino-acid sequence, 360 residues long: MTTTLQQRGSASLWEKFCQWITSTENRIYVGWFGVLMIPTLLTATTCFIIAFIAAPPVDIDGIREPVAGSLLYGNNIISGAVVPSSNAIGLHFYPIWEAASLDEWLYNGGPYQLVIFHFLIGVFCYMGREWELSYRLGMRPWICVAFSAPVAAATAVFLIYPIGQGSFSDGMPLGISGTFNFMIVFQAEHNILMHPFHMLGVAGVFGGSLFSAMHGSLVTSSLVRETTETESQNYGYKFGQEEETYNIVAAHGYFGRLIFQYASFNNSRSLHFFLGAWPVVGIWFTALGVSTMAFNLNGFNFNQSILDSQGRVINTWADILNRANLGFEVMHERNAHNFPLDLAAGEQAPVALQAPAING.

Transmembrane regions (helical) follow at residues 29–46 (YVGW…TATT), 118–133 (HFLI…EWEL), and 142–156 (WICV…AATA). Residue His118 coordinates chlorophyll a. Residue Tyr126 coordinates pheophytin a. [CaMn4O5] cluster-binding residues include Asp170 and Glu189. The helical transmembrane segment at 197–218 (FHMLGVAGVFGGSLFSAMHGSL) threads the bilayer. His198 provides a ligand contact to chlorophyll a. A quinone is bound by residues His215 and 264–265 (SF). His215 serves as a coordination point for Fe cation. Fe cation is bound at residue His272. Residues 274-288 (FLGAWPVVGIWFTAL) traverse the membrane as a helical segment. Residues His332, Glu333, Asp342, and Ala344 each coordinate [CaMn4O5] cluster. Residues 345–360 (AGEQAPVALQAPAING) constitute a propeptide that is removed on maturation.

It belongs to the reaction center PufL/M/PsbA/D family. As to quaternary structure, PSII is composed of 1 copy each of membrane proteins PsbA, PsbB, PsbC, PsbD, PsbE, PsbF, PsbH, PsbI, PsbJ, PsbK, PsbL, PsbM, PsbT, PsbX, PsbY, PsbZ, Psb30/Ycf12, peripheral proteins PsbO, CyanoQ (PsbQ), PsbU, PsbV and a large number of cofactors. It forms dimeric complexes. Requires The D1/D2 heterodimer binds P680, chlorophylls that are the primary electron donor of PSII, and subsequent electron acceptors. It shares a non-heme iron and each subunit binds pheophytin, quinone, additional chlorophylls, carotenoids and lipids. D1 provides most of the ligands for the Mn4-Ca-O5 cluster of the oxygen-evolving complex (OEC). There is also a Cl(-1) ion associated with D1 and D2, which is required for oxygen evolution. The PSII complex binds additional chlorophylls, carotenoids and specific lipids. as cofactor. Post-translationally, tyr-161 forms a radical intermediate that is referred to as redox-active TyrZ, YZ or Y-Z. C-terminally processed by CtpA; processing is essential to allow assembly of the oxygen-evolving complex and thus photosynthetic growth.

It localises to the cellular thylakoid membrane. It catalyses the reaction 2 a plastoquinone + 4 hnu + 2 H2O = 2 a plastoquinol + O2. In terms of biological role, photosystem II (PSII) is a light-driven water:plastoquinone oxidoreductase that uses light energy to abstract electrons from H(2)O, generating O(2) and a proton gradient subsequently used for ATP formation. It consists of a core antenna complex that captures photons, and an electron transfer chain that converts photonic excitation into a charge separation. The D1/D2 (PsbA/PsbD) reaction center heterodimer binds P680, the primary electron donor of PSII as well as several subsequent electron acceptors. This Picosynechococcus sp. (strain ATCC 27264 / PCC 7002 / PR-6) (Agmenellum quadruplicatum) protein is Photosystem II protein D1 1.